Reading from the N-terminus, the 206-residue chain is Orotate phosphoribosyltransferase (206 aa).

5-phospho-alpha-D-ribose 1-diphosphate-binding positions include R93, K97, H99, and 119-127 (EDLISTGGT). Residue S123 coordinates orotate.

Belongs to the purine/pyrimidine phosphoribosyltransferase family. PyrE subfamily. Homodimer. Requires Mg(2+) as cofactor.

The enzyme catalyses orotidine 5'-phosphate + diphosphate = orotate + 5-phospho-alpha-D-ribose 1-diphosphate. It participates in pyrimidine metabolism; UMP biosynthesis via de novo pathway; UMP from orotate: step 1/2. Its function is as follows. Catalyzes the transfer of a ribosyl phosphate group from 5-phosphoribose 1-diphosphate to orotate, leading to the formation of orotidine monophosphate (OMP). This chain is Orotate phosphoribosyltransferase, found in Bacillus caldolyticus.